A 513-amino-acid chain; its full sequence is Histidine ammonia-lyase (513 aa).

A cross-link (5-imidazolinone (Ala-Gly)) is located at residues 146 to 148 (ASG). Ser-147 is modified (2,3-didehydroalanine (Ser)).

It belongs to the PAL/histidase family. Post-translationally, contains an active site 4-methylidene-imidazol-5-one (MIO), which is formed autocatalytically by cyclization and dehydration of residues Ala-Ser-Gly.

Its subcellular location is the cytoplasm. The enzyme catalyses L-histidine = trans-urocanate + NH4(+). The protein operates within amino-acid degradation; L-histidine degradation into L-glutamate; N-formimidoyl-L-glutamate from L-histidine: step 1/3. This Caulobacter vibrioides (strain NA1000 / CB15N) (Caulobacter crescentus) protein is Histidine ammonia-lyase.